A 641-amino-acid polypeptide reads, in one-letter code: Chaperone protein DnaK (641 aa).

Threonine 200 carries the phosphothreonine; by autocatalysis modification. Over residues 605-623 (AAEQGGSADAASGNAQASK) the composition is skewed to low complexity. The tract at residues 605-628 (AAEQGGSADAASGNAQASKAADDV) is disordered.

It belongs to the heat shock protein 70 family.

In terms of biological role, acts as a chaperone. The protein is Chaperone protein DnaK of Xanthomonas oryzae pv. oryzae (strain KACC10331 / KXO85).